A 154-amino-acid polypeptide reads, in one-letter code: 6,7-dimethyl-8-ribityllumazine synthase (154 aa).

Residues Phe-22–Asn-23, Ser-56–Glu-58, and Val-80–Ile-82 contribute to the 5-amino-6-(D-ribitylamino)uracil site. Position 85–86 (Ala-85–Thr-86) interacts with (2S)-2-hydroxy-3-oxobutyl phosphate. Catalysis depends on His-88, which acts as the Proton donor. Phe-113 provides a ligand contact to 5-amino-6-(D-ribitylamino)uracil. Arg-127 is a (2S)-2-hydroxy-3-oxobutyl phosphate binding site. Residue Lys-135 participates in 5-amino-6-(D-ribitylamino)uracil binding.

Belongs to the DMRL synthase family. As to quaternary structure, forms an icosahedral capsid composed of 60 subunits, arranged as a dodecamer of pentamers.

It catalyses the reaction (2S)-2-hydroxy-3-oxobutyl phosphate + 5-amino-6-(D-ribitylamino)uracil = 6,7-dimethyl-8-(1-D-ribityl)lumazine + phosphate + 2 H2O + H(+). It functions in the pathway cofactor biosynthesis; riboflavin biosynthesis; riboflavin from 2-hydroxy-3-oxobutyl phosphate and 5-amino-6-(D-ribitylamino)uracil: step 1/2. Functionally, catalyzes the formation of 6,7-dimethyl-8-ribityllumazine by condensation of 5-amino-6-(D-ribitylamino)uracil with 3,4-dihydroxy-2-butanone 4-phosphate. This is the penultimate step in the biosynthesis of riboflavin. This chain is 6,7-dimethyl-8-ribityllumazine synthase (ribH), found in Aquifex aeolicus (strain VF5).